A 384-amino-acid chain; its full sequence is UDP-galactopyranose mutase (384 aa).

Residues 1–23 (MKSKKILIVGAGFSGAVIGRQLA) form the signal peptide. Residues S14, 33–34 (DQ), N41, and 60–61 (HI) contribute to the FAD site. Residues N84, F151, T156, W160, and Y185 each contribute to the UDP-alpha-D-galactose site. F219 is a binding site for FAD. N270, R280, and Y314 together coordinate UDP-alpha-D-galactose. An FAD-binding site is contributed by R343. Y349 contributes to the UDP-alpha-D-galactose binding site. 350 to 355 (LDMDVT) contributes to the FAD binding site.

It belongs to the UDP-galactopyranose/dTDP-fucopyranose mutase family. As to quaternary structure, homodimer. Requires FAD as cofactor.

It carries out the reaction UDP-alpha-D-galactose = UDP-alpha-D-galactofuranose. Its pathway is bacterial outer membrane biogenesis; LPS O-antigen biosynthesis. In terms of biological role, involved in the biosynthesis of the galactose-containing O-side-chain polysaccharide backbone structure of D-galactan I which is a key component of lipopolysaccharide (LPS). Catalyzes the interconversion through a 2-keto intermediate of uridine diphosphogalactopyranose (UDP-GalP) into uridine diphosphogalactofuranose (UDP-GalF) which is the biosynthetic precursor of galactofuranosyl residues. This is UDP-galactopyranose mutase (rfbD) from Klebsiella pneumoniae.